A 227-amino-acid polypeptide reads, in one-letter code: uncharacterized protein (227 aa).

Belongs to the flavoredoxin family. Requires FMN as cofactor.

This is an uncharacterized protein from Deinococcus radiodurans (strain ATCC 13939 / DSM 20539 / JCM 16871 / CCUG 27074 / LMG 4051 / NBRC 15346 / NCIMB 9279 / VKM B-1422 / R1).